The primary structure comprises 116 residues: Iron-sulfur cluster assembly protein CyaY (116 aa).

The protein belongs to the frataxin family.

In terms of biological role, involved in iron-sulfur (Fe-S) cluster assembly. May act as a regulator of Fe-S biogenesis. The chain is Iron-sulfur cluster assembly protein CyaY from Polaromonas sp. (strain JS666 / ATCC BAA-500).